The sequence spans 79 residues: D-alanyl carrier protein (79 aa).

The 77-residue stretch at 1–77 (MSIEETVIEL…KIVQGVEELQ (77 aa)) folds into the Carrier domain. Residue Ser35 is modified to O-(pantetheine 4'-phosphoryl)serine.

It belongs to the DltC family. 4'-phosphopantetheine is transferred from CoA to a specific serine of apo-DCP.

The protein localises to the cytoplasm. The protein operates within cell wall biogenesis; lipoteichoic acid biosynthesis. In terms of biological role, carrier protein involved in the D-alanylation of lipoteichoic acid (LTA). The loading of thioester-linked D-alanine onto DltC is catalyzed by D-alanine--D-alanyl carrier protein ligase DltA. The DltC-carried D-alanyl group is further transferred to cell membrane phosphatidylglycerol (PG) by forming an ester bond, probably catalyzed by DltD. D-alanylation of LTA plays an important role in modulating the properties of the cell wall in Gram-positive bacteria, influencing the net charge of the cell wall. This is D-alanyl carrier protein from Streptococcus pyogenes serotype M1.